A 201-amino-acid polypeptide reads, in one-letter code: Recombination protein RecR (201 aa).

A C4-type zinc finger spans residues Cys57–Cys72. The Toprim domain occupies Gly81–Pro176.

This sequence belongs to the RecR family.

May play a role in DNA repair. It seems to be involved in an RecBC-independent recombinational process of DNA repair. It may act with RecF and RecO. This chain is Recombination protein RecR, found in Sodalis glossinidius (strain morsitans).